A 402-amino-acid polypeptide reads, in one-letter code: Bisdemethoxycurcumin synthase (402 aa).

Catalysis depends on cysteine 174, which acts as the Acyl-thioester intermediate.

It belongs to the thiolase-like superfamily. Chalcone/stilbene synthases family. As to quaternary structure, homodimer.

It carries out the reaction 2 4-coumaroyl-CoA + malonyl-CoA + H2O + H(+) = bisdemethoxycurcumin + 2 CO2 + 3 CoA. It functions in the pathway secondary metabolite biosynthesis; flavonoid biosynthesis. Its function is as follows. Plant-specific type III polyketide synthase (PKS) that catalyzes the one-pot formation of the C6-C7-C6 diarylheptanoid scaffold of bisdemethoxycurcumin by the condensation of two molecules of 4-coumaroyl-CoA and one molecule of malonyl-CoA. The chain is Bisdemethoxycurcumin synthase from Oryza sativa subsp. japonica (Rice).